The chain runs to 791 residues: MSRVVSRTVPGGACVVNKDDFLKSFNDVDKVSVSSLADAKSKFDQVIAILSKSQEDWNKRRTQLQIIRSIVINCEDVIGRDQLLGQLVRLADCLDLSVKDLRSQILREAAITCSFLFEKYGNDVHQIAERCLPTAFSQLAVSTKVMATSGATLTLFLVQYVQTKQIFTCLTTYSTSKDKNQRRQLCVLLEIVIEHWNDKLKKSILPQIMELIKSAISDADPETRAAGRKAFNKLDAIHSEEADKLFASVDANKQKMLRASDAASSSTSVNSERGSAPFRSKLSAGSVGGMRNVPNISSKFLAQRSASAIDTKQVTRMTTSVSRTPNTRPMTTRTLSKVDTSPGGSKFARPTVGTLGPRTTSNLRARGSVPTSQPGSRNGSPPRRPSTTGTLPMEMQRVKSNLGSSSFVSSLTPDQAESLQKAMNTAKESLGQPSRTEDDEFLLPKRKPKTPQKSAVDISRVEAVIRACVSTSANEKRDGIKMLSIIVSEPNLSQIELKNIGQVLNRLLGEATNPVVLESVASFVKAHHSRLSEWLKLGLGKMFAKKGSEMMPIMKKHIVTTINAILSSFDPALQLKATCELMCDPIHLLSPKARVALLEYLTDLLEKHMERGSPFNTKEVKATILKMFSWMSDQRNMQQIVPHGEKVLCGLFALNAADFSALFNDFNPDYREWAYRILQAHGHNQHAPAPESPSPVRDQQVRANISNTAAQIEDFVVARNFELSAEKSPTSRGMLTSGFKRTDAEPLRPLESDMNTQRMDDISINESFDRLKVRILETTGFYAAFKVDFQE.

Low complexity-rich tracts occupy residues 259-271 (ASDA…SVNS), 323-334 (RTPNTRPMTTRT), and 372-381 (SQPGSRNGSP). Disordered stretches follow at residues 259–283 (ASDA…SKLS), 315–391 (TRMT…TGTL), and 422–454 (AMNT…PQKS). Over residues 422 to 434 (AMNTAKESLGQPS) the composition is skewed to polar residues.

It belongs to the CLASP family. In terms of assembly, interacts with hcp-1 and hcp-2.

The protein resides in the cytoplasm. Its subcellular location is the cytoskeleton. The protein localises to the microtubule organizing center. It is found in the centrosome. It localises to the chromosome. The protein resides in the centromere. Its subcellular location is the kinetochore. The protein localises to the spindle. Its function is as follows. Probable microtubule plus-end tracking protein that promotes the stabilization of dynamic microtubules. Required for the formation of mitotic and meiotic spindles. Specifically promotes the polymerization of kinetochore-bound microtubules. Also required for cytoplasmic streaming. The chain is Protein CLASP-2 (cls-2) from Caenorhabditis briggsae.